The sequence spans 398 residues: NADH-ubiquinone oxidoreductase 49 kDa subunit (398 aa).

It belongs to the complex I 49 kDa subunit family.

The protein resides in the mitochondrion. The catalysed reaction is a ubiquinone + NADH + 5 H(+)(in) = a ubiquinol + NAD(+) + 4 H(+)(out). Functionally, core subunit of the mitochondrial membrane respiratory chain NADH dehydrogenase (Complex I) that is believed to belong to the minimal assembly required for catalysis. Complex I functions in the transfer of electrons from NADH to the respiratory chain. The immediate electron acceptor for the enzyme is believed to be ubiquinone. Component of the iron-sulfur (IP) fragment of the enzyme. Component of the iron-sulfur (IP) fragment of the enzyme. The chain is NADH-ubiquinone oxidoreductase 49 kDa subunit (NAD7) from Cafeteria roenbergensis (Marine flagellate).